Consider the following 656-residue polypeptide: NADH-ubiquinone oxidoreductase chain 5 (656 aa).

17 helical membrane-spanning segments follow: residues 4 to 21, 28 to 50, 81 to 103, 112 to 129, 133 to 155, 176 to 198, 208 to 230, 243 to 262, 272 to 294, 301 to 319, 329 to 351, 364 to 386, 409 to 431, 452 to 471, 514 to 536, 603 to 625, and 629 to 651; these read TLII…FFGR, AHLI…FFEV, LTVS…SISY, RFFS…ILVT, YLIM…NFWF, TLLT…STVF, IITI…VGLH, VSAL…LLMR, TVLV…IGLF, VIAY…AVGL, LVNH…HAVA, EFLP…VPFM, IVYF…VLYL, LFMT…FGYL, FVFT…KLLI, SLGN…GLIF, and LLYF…FALL.

This sequence belongs to the complex I subunit 5 family.

It localises to the mitochondrion inner membrane. The catalysed reaction is a ubiquinone + NADH + 5 H(+)(in) = a ubiquinol + NAD(+) + 4 H(+)(out). Functionally, core subunit of the mitochondrial membrane respiratory chain NADH dehydrogenase (Complex I) that is believed to belong to the minimal assembly required for catalysis. Complex I functions in the transfer of electrons from NADH to the respiratory chain. The immediate electron acceptor for the enzyme is believed to be ubiquinone. The protein is NADH-ubiquinone oxidoreductase chain 5 (nad5) of Aspergillus niger.